A 221-amino-acid polypeptide reads, in one-letter code: Transcription factor bHLH126 (221 aa).

Disordered stretches follow at residues 1–46 and 104–132; these read MDPY…KKLL and RRDELSRETGQGYKSNPDPGKTGSDVGKS. The bHLH domain occupies 42–94; that stretch reads KKKLLHRDIERQRRQEMATLFATLRTHLPLKYIKGKRAVSDHVNGAVNFIKDT.

As to quaternary structure, homodimer.

The protein localises to the nucleus. The sequence is that of Transcription factor bHLH126 (BHLH126) from Arabidopsis thaliana (Mouse-ear cress).